The sequence spans 378 residues: Phospho-N-acetylmuramoyl-pentapeptide-transferase (378 aa).

Transmembrane regions (helical) follow at residues 27–47 (TAFA…WLIN), 74–94 (TMGG…WADL), 96–116 (YPYV…GFLD), 135–155 (LVYQ…MRAY), 184–204 (WTYV…VVFY), 216–236 (GLAI…AYAG), 256–276 (LTIF…YNAH), 280–300 (IFMG…VAVL), 305–325 (ILLL…ILQV), and 355–375 (KIIA…LTTL).

It belongs to the glycosyltransferase 4 family. MraY subfamily. The cofactor is Mg(2+).

The protein localises to the cell inner membrane. The catalysed reaction is UDP-N-acetyl-alpha-D-muramoyl-L-alanyl-gamma-D-glutamyl-meso-2,6-diaminopimeloyl-D-alanyl-D-alanine + di-trans,octa-cis-undecaprenyl phosphate = di-trans,octa-cis-undecaprenyl diphospho-N-acetyl-alpha-D-muramoyl-L-alanyl-D-glutamyl-meso-2,6-diaminopimeloyl-D-alanyl-D-alanine + UMP. The protein operates within cell wall biogenesis; peptidoglycan biosynthesis. Functionally, catalyzes the initial step of the lipid cycle reactions in the biosynthesis of the cell wall peptidoglycan: transfers peptidoglycan precursor phospho-MurNAc-pentapeptide from UDP-MurNAc-pentapeptide onto the lipid carrier undecaprenyl phosphate, yielding undecaprenyl-pyrophosphoryl-MurNAc-pentapeptide, known as lipid I. This is Phospho-N-acetylmuramoyl-pentapeptide-transferase from Solibacter usitatus (strain Ellin6076).